A 41-amino-acid chain; its full sequence is Photosystem II reaction center protein Y (41 aa).

Residues 4-22 (LIVVVLPILAAVTWVVFNI) form a helical membrane-spanning segment.

The protein belongs to the PsbY family. PSII is composed of 1 copy each of membrane proteins PsbA, PsbB, PsbC, PsbD, PsbE, PsbF, PsbH, PsbI, PsbJ, PsbK, PsbL, PsbM, PsbT, PsbX, PsbY, Psb30/Ycf12, peripheral proteins PsbO, CyanoQ (PsbQ), PsbU, PsbV and a large number of cofactors. It forms dimeric complexes.

It is found in the cellular thylakoid membrane. Loosely associated component of the core of photosystem II (PSII), it is not always seen in crystals. PSII is a light-driven water plastoquinone oxidoreductase, using light energy to abstract electrons from H(2)O, generating a proton gradient subsequently used for ATP formation. The protein is Photosystem II reaction center protein Y of Prochlorococcus marinus (strain MIT 9211).